The chain runs to 143 residues: Large ribosomal subunit protein uL15 (143 aa).

Residues 1–57 (MQLNNLKPAAGSKHAKRRVGRGIGSGLGKTAGRGHKGQKSRSGGFHKVGFEGGQMPL) form a disordered region. Residues 21 to 31 (RGIGSGLGKTA) are compositionally biased toward gly residues.

The protein belongs to the universal ribosomal protein uL15 family. As to quaternary structure, part of the 50S ribosomal subunit.

In terms of biological role, binds to the 23S rRNA. The polypeptide is Large ribosomal subunit protein uL15 (Ralstonia nicotianae (strain ATCC BAA-1114 / GMI1000) (Ralstonia solanacearum)).